A 160-amino-acid chain; its full sequence is Small ribosomal subunit protein uS7A (160 aa).

The protein belongs to the universal ribosomal protein uS7 family. In terms of assembly, part of the 30S ribosomal subunit. Contacts proteins S9 and S11.

One of the primary rRNA binding proteins, it binds directly to 16S rRNA where it nucleates assembly of the head domain of the 30S subunit. Is located at the subunit interface close to the decoding center, probably blocks exit of the E-site tRNA. This is Small ribosomal subunit protein uS7A from Aquifex aeolicus (strain VF5).